We begin with the raw amino-acid sequence, 507 residues long: Histidine ammonia-lyase (507 aa).

A cross-link (5-imidazolinone (Ala-Gly)) is located at residues 141–143 (ASG). The residue at position 142 (Ser-142) is a 2,3-didehydroalanine (Ser).

Belongs to the PAL/histidase family. Post-translationally, contains an active site 4-methylidene-imidazol-5-one (MIO), which is formed autocatalytically by cyclization and dehydration of residues Ala-Ser-Gly.

The protein resides in the cytoplasm. It catalyses the reaction L-histidine = trans-urocanate + NH4(+). Its pathway is amino-acid degradation; L-histidine degradation into L-glutamate; N-formimidoyl-L-glutamate from L-histidine: step 1/3. The protein is Histidine ammonia-lyase of Burkholderia lata (strain ATCC 17760 / DSM 23089 / LMG 22485 / NCIMB 9086 / R18194 / 383).